The chain runs to 223 residues: Deoxyribose-phosphate aldolase (223 aa).

Aspartate 89 acts as the Proton donor/acceptor in catalysis. Lysine 152 (schiff-base intermediate with acetaldehyde) is an active-site residue. Lysine 181 serves as the catalytic Proton donor/acceptor.

The protein belongs to the DeoC/FbaB aldolase family. DeoC type 1 subfamily.

It localises to the cytoplasm. It carries out the reaction 2-deoxy-D-ribose 5-phosphate = D-glyceraldehyde 3-phosphate + acetaldehyde. It participates in carbohydrate degradation; 2-deoxy-D-ribose 1-phosphate degradation; D-glyceraldehyde 3-phosphate and acetaldehyde from 2-deoxy-alpha-D-ribose 1-phosphate: step 2/2. Functionally, catalyzes a reversible aldol reaction between acetaldehyde and D-glyceraldehyde 3-phosphate to generate 2-deoxy-D-ribose 5-phosphate. In Listeria monocytogenes serotype 4b (strain CLIP80459), this protein is Deoxyribose-phosphate aldolase.